The primary structure comprises 386 residues: S-adenosylmethionine synthase (386 aa).

An ATP-binding site is contributed by His16. A Mg(2+)-binding site is contributed by Asp18. Residue Glu44 participates in K(+) binding. Glu57 and Gln100 together coordinate L-methionine. Positions 100-110 are flexible loop; that stretch reads QSPDINQGVDR. ATP-binding positions include 164–166, 230–231, Asp239, 245–246, Ala262, and Lys266; these read DGK, KF, and RK. Position 239 (Asp239) interacts with L-methionine. Lys270 provides a ligand contact to L-methionine.

It belongs to the AdoMet synthase family. In terms of assembly, homotetramer; dimer of dimers. Mg(2+) is required as a cofactor. It depends on K(+) as a cofactor.

Its subcellular location is the cytoplasm. It catalyses the reaction L-methionine + ATP + H2O = S-adenosyl-L-methionine + phosphate + diphosphate. Its pathway is amino-acid biosynthesis; S-adenosyl-L-methionine biosynthesis; S-adenosyl-L-methionine from L-methionine: step 1/1. In terms of biological role, catalyzes the formation of S-adenosylmethionine (AdoMet) from methionine and ATP. The overall synthetic reaction is composed of two sequential steps, AdoMet formation and the subsequent tripolyphosphate hydrolysis which occurs prior to release of AdoMet from the enzyme. The polypeptide is S-adenosylmethionine synthase (Helicobacter hepaticus (strain ATCC 51449 / 3B1)).